A 103-amino-acid chain; its full sequence is Large ribosomal subunit protein bL21 (103 aa).

Belongs to the bacterial ribosomal protein bL21 family. Part of the 50S ribosomal subunit. Contacts protein L20.

Functionally, this protein binds to 23S rRNA in the presence of protein L20. This chain is Large ribosomal subunit protein bL21, found in Shewanella sp. (strain ANA-3).